The primary structure comprises 209 residues: Orotate phosphoribosyltransferase (209 aa).

Residues Arg96, Lys100, His102, and 122 to 130 each bind 5-phospho-alpha-D-ribose 1-diphosphate; that span reads EDLISTGGS. Residue Ser126 participates in orotate binding.

Belongs to the purine/pyrimidine phosphoribosyltransferase family. PyrE subfamily. As to quaternary structure, homodimer. Mg(2+) is required as a cofactor.

It catalyses the reaction orotidine 5'-phosphate + diphosphate = orotate + 5-phospho-alpha-D-ribose 1-diphosphate. It participates in pyrimidine metabolism; UMP biosynthesis via de novo pathway; UMP from orotate: step 1/2. Catalyzes the transfer of a ribosyl phosphate group from 5-phosphoribose 1-diphosphate to orotate, leading to the formation of orotidine monophosphate (OMP). In Streptococcus agalactiae serotype III (strain NEM316), this protein is Orotate phosphoribosyltransferase.